The primary structure comprises 397 residues: ATP-dependent RNA helicase eIF4A (397 aa).

The Q motif motif lies at Y23 to Q51. Residues I54–I224 form the Helicase ATP-binding domain. A67–T74 provides a ligand contact to ATP. Residues D172 to D175 carry the DEAD box motif. A Helicase C-terminal domain is found at G235 to F396.

Belongs to the DEAD box helicase family. eIF4A subfamily. In terms of assembly, component of the eIF4F complex, which composition varies with external and internal environmental conditions. It is composed of at least eIF4A, eIF4E and eIF4G.

The protein resides in the cytoplasm. It catalyses the reaction ATP + H2O = ADP + phosphate + H(+). In terms of biological role, ATP-dependent RNA helicase which is a subunit of the eIF4F complex involved in cap recognition and is required for mRNA binding to ribosome. In the current model of translation initiation, eIF4A unwinds RNA secondary structures in the 5'-UTR of mRNAs which is necessary to allow efficient binding of the small ribosomal subunit, and subsequent scanning for the initiator codon. The polypeptide is ATP-dependent RNA helicase eIF4A (TIF1) (Scheffersomyces stipitis (strain ATCC 58785 / CBS 6054 / NBRC 10063 / NRRL Y-11545) (Yeast)).